The primary structure comprises 963 residues: Importin-13 (963 aa).

HEAT repeat units follow at residues 24 to 54, 56 to 88, 95 to 135, 142 to 179, 194 to 231, 236 to 268, 276 to 325, 330 to 372, 375 to 438, 440 to 476, 487 to 522, 524 to 558, 562 to 600, 603 to 648, 676 to 716, 720 to 754, 761 to 803, 815 to 845, 860 to 893, and 897 to 931; these read ENVEKALHQLYYDPNIENKNLAQKWLMQAQV, PQAWHFSWQLLQPDKVPEIQYFGASALHIKISR, TDQY…LSMM, AVADMVRLFQAEDSPVDGQGRCLALLELLTVLPEEFQT, LAVECGAVFPLLEQLLQQPSSPSCVRQKVLKCFSSWVQ, LQDCEALIQAAFAALQDSELFDSSVEAIVNAIS, VNTL…ALLD, WQSF…DDIL, EAEK…YEML, AELLSNLYDKLGRLLTSSEEPYSWQHTEALLYGFQSI, VVPGLIGLIPRISISNVQLADTVMFTIGALSEWLAD, PVMINSVLPLVLHALGNPELSVSSVSTLKKICREC, LPPYAANIVAVSQDVLMKQIHKTSQCMWLMQALGFLLSA, VEEI…SNLF, PVVV…VKTL, FAPMVPQLCEMLGRMYSTIPQASALDLTRQLVHIF, FPPI…ALKR, VKAVFQCAVLALKFPEAPTVKASCGFFTELL, EDGRMLLIAVLEAIGGQASRSLMDCFADILFALN, and FSLLSMWIKEALQPPGFPSARLSPEQKDTFSQQIL. The region spanning 45–111 is the Importin N-terminal domain; sequence AQKWLMQAQV…KAQLFTQITR (67 aa).

It belongs to the importin beta family. As to quaternary structure, interacts with UBC9, RAN, RBM8A, eIF-1A and PAX6. Expressed in fetal brain, heart, intestine and kidney.

Its subcellular location is the cytoplasm. It is found in the nucleus. Functionally, functions in nuclear protein import as nuclear transport receptor. Serves as receptor for nuclear localization signals (NLS) in cargo substrates. Is thought to mediate docking of the importin/substrate complex to the nuclear pore complex (NPC) through binding to nucleoporin and the complex is subsequently translocated through the pore by an energy requiring, Ran-dependent mechanism. At the nucleoplasmic side of the NPC, Ran binds to the importin, the importin/substrate complex dissociates and importin is re-exported from the nucleus to the cytoplasm where GTP hydrolysis releases Ran. The directionality of nuclear import is thought to be conferred by an asymmetric distribution of the GTP- and GDP-bound forms of Ran between the cytoplasm and nucleus. Mediates the nuclear import of UBC9, the RBM8A/MAGOH complex, PAX6 and probably other members of the paired homeobox family. Also mediates nuclear export of eIF-1A, and the cytoplasmic release of eIF-1A is triggered by the loading of import substrates onto IPO13. The sequence is that of Importin-13 (IPO13) from Homo sapiens (Human).